The following is a 380-amino-acid chain: Cytochrome b (380 aa).

4 helical membrane-spanning segments follow: residues 33–53, 77–98, 113–133, and 178–198; these read FGSL…FLAM, WLIR…YLHI, WNIG…GYVL, and FFAF…LHFF. Heme b-binding residues include H83 and H97. Residues H182 and H196 each coordinate heme b. H201 contributes to the a ubiquinone binding site. Transmembrane regions (helical) follow at residues 226 to 246, 288 to 308, 320 to 340, and 347 to 367; these read YKDL…SFFS, LGGV…PILH, LTQL…WIGG, and FIAV…ILIP.

Belongs to the cytochrome b family. In terms of assembly, the cytochrome bc1 complex contains 3 respiratory subunits (MT-CYB, CYC1 and UQCRFS1), 2 core proteins (UQCRC1 and UQCRC2) and probably 6 low-molecular weight proteins. The cofactor is heme b.

It localises to the mitochondrion inner membrane. In terms of biological role, component of the ubiquinol-cytochrome c reductase complex (complex III or cytochrome b-c1 complex) that is part of the mitochondrial respiratory chain. The b-c1 complex mediates electron transfer from ubiquinol to cytochrome c. Contributes to the generation of a proton gradient across the mitochondrial membrane that is then used for ATP synthesis. The protein is Cytochrome b (mt-cyb) of Zenopsis nebulosa (Mirror dory).